A 249-amino-acid polypeptide reads, in one-letter code: Isoprenyl transferase (249 aa).

D29 is an active-site residue. D29 contacts Mg(2+). Substrate-binding positions include 30–33 (GNGR), W34, R42, H46, and 74–76 (STE). The active-site Proton acceptor is N77. Residues W78, R80, R197, and 203–205 (RLS) contribute to the substrate site. Position 216 (E216) interacts with Mg(2+).

This sequence belongs to the UPP synthase family. Homodimer. It depends on Mg(2+) as a cofactor.

Functionally, catalyzes the condensation of isopentenyl diphosphate (IPP) with allylic pyrophosphates generating different type of terpenoids. The protein is Isoprenyl transferase of Trichormus variabilis (strain ATCC 29413 / PCC 7937) (Anabaena variabilis).